Consider the following 313-residue polypeptide: Protoheme IX farnesyltransferase (313 aa).

8 consecutive transmembrane segments (helical) span residues 32 to 52, 53 to 73, 120 to 140, 153 to 173, 180 to 200, 226 to 246, 248 to 268, and 284 to 304; these read VMSL…GDFH, PVLA…AGAL, VLVN…YVVI, IVIG…AVTG, LLLF…LALF, ILLY…LGYF, AVYG…AIRV, and LFKF…IEVV.

The protein belongs to the UbiA prenyltransferase family. Protoheme IX farnesyltransferase subfamily.

The protein resides in the cell inner membrane. It catalyses the reaction heme b + (2E,6E)-farnesyl diphosphate + H2O = Fe(II)-heme o + diphosphate. Its pathway is porphyrin-containing compound metabolism; heme O biosynthesis; heme O from protoheme: step 1/1. In terms of biological role, converts heme B (protoheme IX) to heme O by substitution of the vinyl group on carbon 2 of heme B porphyrin ring with a hydroxyethyl farnesyl side group. In Rhodopseudomonas palustris (strain BisB5), this protein is Protoheme IX farnesyltransferase.